The chain runs to 106 residues: Large ribosomal subunit protein uL24 (106 aa).

This sequence belongs to the universal ribosomal protein uL24 family. In terms of assembly, part of the 50S ribosomal subunit.

Functionally, one of two assembly initiator proteins, it binds directly to the 5'-end of the 23S rRNA, where it nucleates assembly of the 50S subunit. One of the proteins that surrounds the polypeptide exit tunnel on the outside of the subunit. In Acinetobacter baylyi (strain ATCC 33305 / BD413 / ADP1), this protein is Large ribosomal subunit protein uL24.